Reading from the N-terminus, the 119-residue chain is Small ribosomal subunit protein bS6 (119 aa).

Residues 99–119 (KKEKKQSRKEEGSENSEKVEE) are disordered.

Belongs to the bacterial ribosomal protein bS6 family.

Functionally, binds together with bS18 to 16S ribosomal RNA. The protein is Small ribosomal subunit protein bS6 of Thermosipho melanesiensis (strain DSM 12029 / CIP 104789 / BI429).